We begin with the raw amino-acid sequence, 103 residues long: Co-chaperonin GroES (103 aa).

The protein belongs to the GroES chaperonin family. Heptamer of 7 subunits arranged in a ring. Interacts with the chaperonin GroEL.

It is found in the cytoplasm. Its function is as follows. Together with the chaperonin GroEL, plays an essential role in assisting protein folding. The GroEL-GroES system forms a nano-cage that allows encapsulation of the non-native substrate proteins and provides a physical environment optimized to promote and accelerate protein folding. GroES binds to the apical surface of the GroEL ring, thereby capping the opening of the GroEL channel. This Nostoc sp. (strain PCC 7120 / SAG 25.82 / UTEX 2576) protein is Co-chaperonin GroES.